The chain runs to 591 residues: L-fucose isomerase (591 aa).

Active-site proton acceptor residues include Glu-337 and Asp-361. Residues Glu-337, Asp-361, and His-528 each coordinate Mn(2+).

The protein belongs to the L-fucose isomerase family. Homohexamer. Mn(2+) serves as cofactor.

It localises to the cytoplasm. It carries out the reaction L-fucose = L-fuculose. It participates in carbohydrate degradation; L-fucose degradation; L-lactaldehyde and glycerone phosphate from L-fucose: step 1/3. Functionally, converts the aldose L-fucose into the corresponding ketose L-fuculose. In Shigella dysenteriae serotype 1 (strain Sd197), this protein is L-fucose isomerase.